We begin with the raw amino-acid sequence, 84 residues long: Cell division topological specificity factor (84 aa).

It belongs to the MinE family.

Its function is as follows. Prevents the cell division inhibition by proteins MinC and MinD at internal division sites while permitting inhibition at polar sites. This ensures cell division at the proper site by restricting the formation of a division septum at the midpoint of the long axis of the cell. In Granulibacter bethesdensis (strain ATCC BAA-1260 / CGDNIH1), this protein is Cell division topological specificity factor.